The primary structure comprises 211 residues: Outer-membrane lipoprotein carrier protein (211 aa).

The signal sequence occupies residues 1–25 (MRAIRMLLVSALTLGSLSATLSAHA).

The protein belongs to the LolA family. Monomer.

It localises to the periplasm. Its function is as follows. Participates in the translocation of lipoproteins from the inner membrane to the outer membrane. Only forms a complex with a lipoprotein if the residue after the N-terminal Cys is not an aspartate (The Asp acts as a targeting signal to indicate that the lipoprotein should stay in the inner membrane). This Pseudomonas putida (strain W619) protein is Outer-membrane lipoprotein carrier protein.